The sequence spans 60 residues: Mastoparan-VT5 (60 aa).

An N-terminal signal peptide occupies residues Met-1–Ala-27. 4 AXPX repeats span residues Ala-27 to Leu-30, Ala-31 to Leu-34, Ala-37 to Asp-40, and Ala-41 to Glu-44. Positions Asp-28 to Thr-45 are excised as a propeptide.

Belongs to the MCD family. Mastoparan subfamily. Expressed by the venom gland.

The protein resides in the secreted. In terms of biological role, the synthetic peptide shows weak antimicrobial activities against a few Gram-positive bacteria (only 2 on the 11 strains tested) and the fungus C.albicans. Does not show activity against all the Gram-negative bacteria tested. Exhibits little hemolytic activity against washed human erythrocytes. The polypeptide is Mastoparan-VT5 (Vespa tropica (Greater banded hornet)).